We begin with the raw amino-acid sequence, 264 residues long: Hydroxyethylthiazole kinase (264 aa).

Met55 serves as a coordination point for substrate. ATP contacts are provided by Arg130 and Ser176. Substrate is bound at residue Gly203.

It belongs to the Thz kinase family. Mg(2+) serves as cofactor.

It carries out the reaction 5-(2-hydroxyethyl)-4-methylthiazole + ATP = 4-methyl-5-(2-phosphooxyethyl)-thiazole + ADP + H(+). It functions in the pathway cofactor biosynthesis; thiamine diphosphate biosynthesis; 4-methyl-5-(2-phosphoethyl)-thiazole from 5-(2-hydroxyethyl)-4-methylthiazole: step 1/1. Functionally, catalyzes the phosphorylation of the hydroxyl group of 4-methyl-5-beta-hydroxyethylthiazole (THZ). This is Hydroxyethylthiazole kinase from Leptospira borgpetersenii serovar Hardjo-bovis (strain JB197).